The following is a 221-amino-acid chain: Ribosomal RNA small subunit methyltransferase G (221 aa).

Residues Gly90, Leu95, 141 to 142 (VE), and Arg154 contribute to the S-adenosyl-L-methionine site.

It belongs to the methyltransferase superfamily. RNA methyltransferase RsmG family.

Its subcellular location is the cytoplasm. The catalysed reaction is guanosine(527) in 16S rRNA + S-adenosyl-L-methionine = N(7)-methylguanosine(527) in 16S rRNA + S-adenosyl-L-homocysteine. Specifically methylates the N7 position of guanine in position 527 of 16S rRNA. The protein is Ribosomal RNA small subunit methyltransferase G of Polaromonas naphthalenivorans (strain CJ2).